The following is a 297-amino-acid chain: MRPPKHLLRTSDLDNSQIETILQQAQTYKDMHHRENLKNKTIITIFFENSTRTLSSFEIAAKRLSADVVRLDVSKSSTTKGESMSDTAANLNAMNPSAIIIRHKNAGAGYYLKFQVSCPIINAGDGAHAHPTQALLDLLTLKEHFDNDLNNLKGKKIAIIGDIVNSRVANSNIELLSRFGMEVILVAPPHFLPSTHLRTCYSLREIAKEVDVFMSLRTQTERHDKQIYGSLKDYASQYCLTPEILSDRDVIVLHPGPVHRNIDIDDEVLKDPRCKVLEQVTNGVCVRMAVLEFCICT.

Carbamoyl phosphate contacts are provided by Arg52 and Thr53. Lys80 is a binding site for L-aspartate. Residues Arg102, His130, and Gln133 each coordinate carbamoyl phosphate. L-aspartate-binding residues include Arg167 and Arg217. Carbamoyl phosphate contacts are provided by Gly256 and Pro257.

The protein belongs to the aspartate/ornithine carbamoyltransferase superfamily. ATCase family. Heterododecamer (2C3:3R2) of six catalytic PyrB chains organized as two trimers (C3), and six regulatory PyrI chains organized as three dimers (R2).

The enzyme catalyses carbamoyl phosphate + L-aspartate = N-carbamoyl-L-aspartate + phosphate + H(+). It functions in the pathway pyrimidine metabolism; UMP biosynthesis via de novo pathway; (S)-dihydroorotate from bicarbonate: step 2/3. In terms of biological role, catalyzes the condensation of carbamoyl phosphate and aspartate to form carbamoyl aspartate and inorganic phosphate, the committed step in the de novo pyrimidine nucleotide biosynthesis pathway. The protein is Aspartate carbamoyltransferase catalytic subunit of Helicobacter hepaticus (strain ATCC 51449 / 3B1).